The following is a 219-amino-acid chain: Probable N-acetyltransferase camello (219 aa).

2 consecutive transmembrane segments (helical) span residues 44-64 (FITF…VLAL) and 66-86 (SLVA…HGLA). The region spanning 62–211 (LALTSLVALL…VHQYTSFTVA (150 aa)) is the N-acetyltransferase domain.

This sequence belongs to the camello family.

It is found in the golgi apparatus membrane. Functionally, plays a role in regulation of gastrulation, possibly by controlled reduction of cell adhesion in the periblastopore region which is necessary for optimal cell motility. This chain is Probable N-acetyltransferase camello, found in Xenopus tropicalis (Western clawed frog).